We begin with the raw amino-acid sequence, 347 residues long: MNPLIFTMIMLTVILGTTIVMMSSHWLMIWMGFEMNMLAVIPLLMKQYNPRSMEAATKYFLTQATASMLLMLAVIINLLYSGQWTFTKLMNPTASIIMTLALGMKMGLAPFHFWVPEVTQGISLSSGLILLTWQKLAPLSVLYVISPAINLDLILLMSMMSIAIGGWGGLNQTQLRKILAYSSIAHMGWMASILVFNPTMTLLNLLLYILMTTTTFMLFMVASATTTLSLSHMWNKMPLITTSTLTIMLSLGGLPPLTGFLPKWMIIQELTKNNNITLATLMAITALLNLFFYMRLTYATSLTMFPTTNNMKMKWQFNNKKQLKCLPVLIILSTITLPLAPAITLLN.

Helical transmembrane passes span 3-23 (PLIF…VMMS), 25-45 (HWLM…PLLM), 59-79 (YFLT…INLL), 96-116 (IIMT…FWVP), 122-144 (ISLS…VLYV), 149-171 (INLD…GGLN), 178-198 (ILAY…VFNP), 202-222 (LLNL…FMVA), 247-267 (IMLS…WMII), 276-296 (ITLA…YMRL), and 326-346 (LPVL…ITLL).

Belongs to the complex I subunit 2 family. In terms of assembly, core subunit of respiratory chain NADH dehydrogenase (Complex I) which is composed of 45 different subunits. Interacts with TMEM242.

It is found in the mitochondrion inner membrane. The catalysed reaction is a ubiquinone + NADH + 5 H(+)(in) = a ubiquinol + NAD(+) + 4 H(+)(out). Core subunit of the mitochondrial membrane respiratory chain NADH dehydrogenase (Complex I) which catalyzes electron transfer from NADH through the respiratory chain, using ubiquinone as an electron acceptor. Essential for the catalytic activity and assembly of complex I. The chain is NADH-ubiquinone oxidoreductase chain 2 from Saccopteryx bilineata (Greater white-lined bat).